Here is a 154-residue protein sequence, read N- to C-terminus: AP-1 complex subunit sigma-3 (154 aa).

This sequence belongs to the adaptor complexes small subunit family. In terms of assembly, adaptor protein complex 1 (AP-1) is a heterotetramer composed of two large adaptins (gamma-type subunit AP1G1 and beta-type subunit AP1B1), a medium adaptin (mu-type subunit AP1M1 or AP1M2) and a small adaptin (sigma-type subunit AP1S1 or AP1S2 or AP1S3).

The protein localises to the golgi apparatus. Its subcellular location is the cytoplasmic vesicle membrane. It is found in the membrane. The protein resides in the clathrin-coated pit. Subunit of clathrin-associated adaptor protein complex 1 that plays a role in protein sorting in the late-Golgi/trans-Golgi network (TGN) and/or endosomes. The AP complexes mediate both the recruitment of clathrin to membranes and the recognition of sorting signals within the cytosolic tails of transmembrane cargo molecules. Involved in TLR3 trafficking. This chain is AP-1 complex subunit sigma-3 (Ap1s3), found in Mus musculus (Mouse).